The primary structure comprises 283 residues: 2-hydroxy-6-oxononadienedioate/2-hydroxy-6-oxononatrienedioate hydrolase (283 aa).

The 235-residue stretch at 35–269 folds into the AB hydrolase-1 domain; sequence VVVMFHGSGP…KCGHWAQWEH (235 aa). Residue histidine 263 is the Proton acceptor of the active site.

The protein belongs to the AB hydrolase superfamily. MhpC family. In terms of assembly, homodimer.

It carries out the reaction (2Z,4E)-2-hydroxy-6-oxonona-2,4-dienedioate + H2O = (2Z)-2-hydroxypenta-2,4-dienoate + succinate + H(+). The catalysed reaction is (2Z,4E,7E)-2-hydroxy-6-oxonona-2,4,7-trienedioate + H2O = (2Z)-2-hydroxypenta-2,4-dienoate + fumarate + H(+). It participates in aromatic compound metabolism; 3-phenylpropanoate degradation. Catalyzes the cleavage of the C5-C6 bond of 2-hydroxy-6-oxononadienedioate and 2-hydroxy-6-oxononatrienedioate, a dienol ring fission product of the bacterial meta-cleavage pathway for degradation of phenylpropionic acid. In Pseudomonas sp, this protein is 2-hydroxy-6-oxononadienedioate/2-hydroxy-6-oxononatrienedioate hydrolase.